A 355-amino-acid chain; its full sequence is Protein RecA (355 aa).

67–74 serves as a coordination point for ATP; the sequence is GPESSGKT.

It belongs to the RecA family.

The protein resides in the cytoplasm. Its function is as follows. Can catalyze the hydrolysis of ATP in the presence of single-stranded DNA, the ATP-dependent uptake of single-stranded DNA by duplex DNA, and the ATP-dependent hybridization of homologous single-stranded DNAs. It interacts with LexA causing its activation and leading to its autocatalytic cleavage. The protein is Protein RecA of Shewanella baltica (strain OS195).